A 430-amino-acid polypeptide reads, in one-letter code: Trigger factor (430 aa).

One can recognise a PPIase FKBP-type domain in the interval 163–248 (GNIAIIDFKG…VKEIKVKEIP (86 aa)).

The protein belongs to the FKBP-type PPIase family. Tig subfamily.

Its subcellular location is the cytoplasm. It carries out the reaction [protein]-peptidylproline (omega=180) = [protein]-peptidylproline (omega=0). Functionally, involved in protein export. Acts as a chaperone by maintaining the newly synthesized protein in an open conformation. Functions as a peptidyl-prolyl cis-trans isomerase. The polypeptide is Trigger factor (Clostridium kluyveri (strain NBRC 12016)).